The primary structure comprises 344 residues: MADPRFYDRLGPLTLKDIAALSGAAISDSGTADQSVDRVTPLGEPVAGALSYAESGKLLRSAPDGALSGVAVICPPDAASEATRLGAAVLTHTAPRAAFASVLPALFQTRSFATDSFIDPSAKIGAGTRLGAGVVIGEGAEIGTDCVIGPHCVIGPGCRIGDRSRLSPHVSLQCSDIGADCNILAGAVIGEDGFGIAVSNGNTVGILHLGSVLIGDHVTIGANCTIDRGLFGATRIGASSKIDNLCHIAHNADIGENVIMAGYSGLAGSAVIADNAMLGGRVGVYDHVTIGEGARVGANSAASRDVPAGEFWVGNPAQPMRQHMRELAELRRLARPKNKTPKKG.

The active-site Proton acceptor is His250.

It belongs to the transferase hexapeptide repeat family. LpxD subfamily. As to quaternary structure, homotrimer.

It catalyses the reaction a UDP-3-O-[(3R)-3-hydroxyacyl]-alpha-D-glucosamine + a (3R)-hydroxyacyl-[ACP] = a UDP-2-N,3-O-bis[(3R)-3-hydroxyacyl]-alpha-D-glucosamine + holo-[ACP] + H(+). It functions in the pathway bacterial outer membrane biogenesis; LPS lipid A biosynthesis. In terms of biological role, catalyzes the N-acylation of UDP-3-O-acylglucosamine using 3-hydroxyacyl-ACP as the acyl donor. Is involved in the biosynthesis of lipid A, a phosphorylated glycolipid that anchors the lipopolysaccharide to the outer membrane of the cell. The sequence is that of UDP-3-O-acylglucosamine N-acyltransferase from Maricaulis maris (strain MCS10) (Caulobacter maris).